The following is a 153-amino-acid chain: Histone H2B.8 (153 aa).

2 stretches are compositionally biased toward basic and acidic residues: residues 1–28 (MAPK…EKAP) and 36–53 (EKRL…EGKK). Residues 1-61 (MAPKAEKKPA…KKAGRKKAKK (61 aa)) form a disordered region. An N6-acetyllysine mark is found at lysine 7 and lysine 37. Lysine 149 is covalently cross-linked (Glycyl lysine isopeptide (Lys-Gly) (interchain with G-Cter in ubiquitin)).

This sequence belongs to the histone H2B family. In terms of assembly, the nucleosome is a histone octamer containing two molecules each of H2A, H2B, H3 and H4 assembled in one H3-H4 heterotetramer and two H2A-H2B heterodimers. The octamer wraps approximately 147 bp of DNA. Post-translationally, can be acetylated to form H2BK6ac and H2BK33ac. Monoubiquitinated by BRE1 to form H2BK143ub1 and deubiquitinated by UBP26. Required for heterochromatic histone H3 di- and trimethylation at H3K4me. May give a specific tag for epigenetic transcriptional activation.

The protein resides in the nucleus. It is found in the chromosome. Core component of nucleosome. Nucleosomes wrap and compact DNA into chromatin, limiting DNA accessibility to the cellular machineries which require DNA as a template. Histones thereby play a central role in transcription regulation, DNA repair, DNA replication and chromosomal stability. DNA accessibility is regulated via a complex set of post-translational modifications of histones, also called histone code, and nucleosome remodeling. The chain is Histone H2B.8 (H2B.8) from Oryza sativa subsp. indica (Rice).